We begin with the raw amino-acid sequence, 430 residues long: Glutamate-1-semialdehyde 2,1-aminomutase (430 aa).

Lys-267 bears the N6-(pyridoxal phosphate)lysine mark.

It belongs to the class-III pyridoxal-phosphate-dependent aminotransferase family. HemL subfamily. Homodimer. Pyridoxal 5'-phosphate is required as a cofactor.

It is found in the cytoplasm. The enzyme catalyses (S)-4-amino-5-oxopentanoate = 5-aminolevulinate. It functions in the pathway porphyrin-containing compound metabolism; protoporphyrin-IX biosynthesis; 5-aminolevulinate from L-glutamyl-tRNA(Glu): step 2/2. The sequence is that of Glutamate-1-semialdehyde 2,1-aminomutase from Anaeromyxobacter dehalogenans (strain 2CP-C).